A 682-amino-acid chain; its full sequence is UvrABC system protein B (682 aa).

Residues 27-414 (DNIRAGVAHQ…SEGIVVEQII (388 aa)) form the Helicase ATP-binding domain. 40–47 (GVTGSGKT) contacts ATP. The Beta-hairpin motif lies at 93 to 116 (YYDYYQPEAYVPTSDTYIEKDSSI). The 163-residue stretch at 432–594 (QMEDLMTECR…IEPVSVRKSL (163 aa)) folds into the Helicase C-terminal domain. Residues 609–628 (AAKGRGKGRGRQAAPAQTAA) are disordered. Residues 642-677 (GGLIQRLEREMRESARDLEFEKAAELRDRIRMLRER) form the UVR domain.

The protein belongs to the UvrB family. In terms of assembly, forms a heterotetramer with UvrA during the search for lesions. Interacts with UvrC in an incision complex.

It is found in the cytoplasm. Functionally, the UvrABC repair system catalyzes the recognition and processing of DNA lesions. A damage recognition complex composed of 2 UvrA and 2 UvrB subunits scans DNA for abnormalities. Upon binding of the UvrA(2)B(2) complex to a putative damaged site, the DNA wraps around one UvrB monomer. DNA wrap is dependent on ATP binding by UvrB and probably causes local melting of the DNA helix, facilitating insertion of UvrB beta-hairpin between the DNA strands. Then UvrB probes one DNA strand for the presence of a lesion. If a lesion is found the UvrA subunits dissociate and the UvrB-DNA preincision complex is formed. This complex is subsequently bound by UvrC and the second UvrB is released. If no lesion is found, the DNA wraps around the other UvrB subunit that will check the other stand for damage. In Oleidesulfovibrio alaskensis (strain ATCC BAA-1058 / DSM 17464 / G20) (Desulfovibrio alaskensis), this protein is UvrABC system protein B.